Consider the following 271-residue polypeptide: Probable short-chain type dehydrogenase/reductase VdlC (271 aa).

1-25 (MAVITGASSGIGLECVLMLLNQGYK) provides a ligand contact to NAD(+). Residue S129 participates in substrate binding. Y142 acts as the Proton acceptor in catalysis.

Belongs to the short-chain dehydrogenases/reductases (SDR) family.

This is Probable short-chain type dehydrogenase/reductase VdlC (vdlC) from Helicobacter pylori (strain J99 / ATCC 700824) (Campylobacter pylori J99).